The sequence spans 416 residues: UDP-N-acetylmuramoylalanine--D-glutamate ligase (416 aa).

Glycine 104–threonine 110 contacts ATP.

This sequence belongs to the MurCDEF family.

The protein resides in the cytoplasm. It carries out the reaction UDP-N-acetyl-alpha-D-muramoyl-L-alanine + D-glutamate + ATP = UDP-N-acetyl-alpha-D-muramoyl-L-alanyl-D-glutamate + ADP + phosphate + H(+). Its pathway is cell wall biogenesis; peptidoglycan biosynthesis. Functionally, cell wall formation. Catalyzes the addition of glutamate to the nucleotide precursor UDP-N-acetylmuramoyl-L-alanine (UMA). The protein is UDP-N-acetylmuramoylalanine--D-glutamate ligase of Francisella tularensis subsp. tularensis (strain WY96-3418).